Consider the following 76-residue polypeptide: Small, acid-soluble spore protein Tlp (76 aa).

Composition is skewed to basic and acidic residues over residues Met1–Glu15, Asp26–Glu38, and Glu46–Ser76. The tract at residues Met1 to Ser76 is disordered.

The protein belongs to the Tlp family.

The protein localises to the spore core. The sequence is that of Small, acid-soluble spore protein Tlp from Shouchella clausii (strain KSM-K16) (Alkalihalobacillus clausii).